The chain runs to 291 residues: Small ribosomal subunit protein uS2 (291 aa).

Residues 256-291 (LRGEGTAPAASEEQPAEEPAPAAAEAQTDAAVGTAV) are disordered. The segment covering 261–291 (TAPAASEEQPAEEPAPAAAEAQTDAAVGTAV) has biased composition (low complexity).

It belongs to the universal ribosomal protein uS2 family.

The chain is Small ribosomal subunit protein uS2 from Frankia alni (strain DSM 45986 / CECT 9034 / ACN14a).